A 602-amino-acid chain; its full sequence is UvrABC system protein C (602 aa).

Residues 17 to 94 (KTSGCYKMYS…IKKYKPTYNI (78 aa)) form the GIY-YIG domain. The UVR domain maps to 199–234 (SKLLNDIEIKMKEVIMKENFEAAIKLKETKKSLIEI).

It belongs to the UvrC family. As to quaternary structure, interacts with UvrB in an incision complex.

The protein resides in the cytoplasm. Its function is as follows. The UvrABC repair system catalyzes the recognition and processing of DNA lesions. UvrC both incises the 5' and 3' sides of the lesion. The N-terminal half is responsible for the 3' incision and the C-terminal half is responsible for the 5' incision. The polypeptide is UvrABC system protein C (Borrelia recurrentis (strain A1)).